Reading from the N-terminus, the 300-residue chain is Mycothiol acetyltransferase (300 aa).

2 N-acetyltransferase domains span residues 4–140 and 151–300; these read IDWR…RPLT and VRLA…AVAD. Aspartate 36 is a binding site for 1D-myo-inositol 2-(L-cysteinylamino)-2-deoxy-alpha-D-glucopyranoside. 79 to 81 is an acetyl-CoA binding site; it reads LVV. Positions 178, 219, and 227 each coordinate 1D-myo-inositol 2-(L-cysteinylamino)-2-deoxy-alpha-D-glucopyranoside. Residue 231 to 233 participates in acetyl-CoA binding; sequence VGV. Residue tyrosine 269 coordinates 1D-myo-inositol 2-(L-cysteinylamino)-2-deoxy-alpha-D-glucopyranoside. 274 to 279 contributes to the acetyl-CoA binding site; that stretch reads NGAAVK.

The protein belongs to the acetyltransferase family. MshD subfamily. In terms of assembly, monomer.

The catalysed reaction is 1D-myo-inositol 2-(L-cysteinylamino)-2-deoxy-alpha-D-glucopyranoside + acetyl-CoA = mycothiol + CoA + H(+). Its function is as follows. Catalyzes the transfer of acetyl from acetyl-CoA to desacetylmycothiol (Cys-GlcN-Ins) to form mycothiol. The polypeptide is Mycothiol acetyltransferase (Mycobacterium sp. (strain MCS)).